Here is a 1750-residue protein sequence, read N- to C-terminus: Protein TIC 214 (1750 aa).

6 consecutive transmembrane segments (helical) span residues 12–32 (KIINSVIVVGLYYGFMTALSI), 69–89 (FIMGQFIRLISIYYGPLYVAL), 97–117 (ILALPYLLIHLFWNTDKSFFA), 129–149 (LEIYCVFLNHFALQLLNSCIL), 177–197 (FAWFIGQLFILNCFELVLVWI), and 216–236 (IFVIFLNCIFGSLLFLLSIQC). Residues 260-277 (RERLQKEEERGVEKKEQS) show a composition bias toward basic and acidic residues. Disordered stretches follow at residues 260 to 282 (RERLQKEEERGVEKKEQSTEEDP), 617 to 638 (ATTTNSKTNTTKDTNLETKKES), 718 to 738 (STDKKRGKTKKEEKRENKQRE), 1205 to 1225 (RNSRGNYRLSDSKKQNVPKPV), and 1419 to 1512 (ETDS…NKKE). Residues 617 to 629 (ATTTNSKTNTTKD) show a composition bias toward low complexity. The span at 727–738 (KKEEKRENKQRE) shows a compositional bias: basic and acidic residues. The segment covering 1420–1512 (TDSKQKSETD…TKSDKKNKKE (93 aa)) has biased composition (basic and acidic residues).

Belongs to the TIC214 family. Part of the Tic complex.

The protein localises to the plastid. Its subcellular location is the chloroplast inner membrane. Functionally, involved in protein precursor import into chloroplasts. May be part of an intermediate translocation complex acting as a protein-conducting channel at the inner envelope. The chain is Protein TIC 214 from Cuscuta reflexa (Southern Asian dodder).